The primary structure comprises 190 residues: MPRANEIKKGMVLNYNGKLLIVKNIDIQSPSARGAATLYKMRFSDVRTGLKVEERFKGDDIVDTVTLTRRFVDFSYVDGNEYVFMDKEDYTPYTFTKEQIEEELQFIPEGGMPDMQVLTWDGQLLALELPQTADLEIIETAPGIKGASASSRTKPATMSTGLVIQVPEYLTTGEKIRIHIEECRYMGRAD.

This sequence belongs to the elongation factor P family.

This chain is Elongation factor P-like protein, found in Klebsiella pneumoniae subsp. pneumoniae (strain ATCC 700721 / MGH 78578).